Reading from the N-terminus, the 323-residue chain is Prostaglandin F synthase 2 (323 aa).

NADP(+)-binding positions include 20-24 (GFGTY) and Asp-50. Residue Tyr-55 is the Proton donor of the active site. His-117 contacts substrate. NADP(+) is bound by residues 166 to 167 (SN), Gln-190, 216 to 221 (YAALGA), and 270 to 280 (KSFNKKRIKEN).

The protein belongs to the aldo/keto reductase family. As to quaternary structure, monomer.

It is found in the cytoplasm. It carries out the reaction prostaglandin F2alpha + NADP(+) = prostaglandin D2 + NADPH + H(+). The protein operates within lipid metabolism; prostaglandin biosynthesis. Its function is as follows. Catalyzes the reduction of PGD(2) and PGH(2) to PGF(2 alpha) and a stereoisomer, respectively. It has a broad substrate specificity and also reduces other carbonyl compounds. This is Prostaglandin F synthase 2 from Bos taurus (Bovine).